A 633-amino-acid polypeptide reads, in one-letter code: ATP-dependent clpX-like chaperone, mitochondrial (633 aa).

The N-terminal 56 residues, 1–56, are a transit peptide targeting the mitochondrion; sequence MPSCGACTCGAAAVRLITSSLASAQRGISGGRIHMSVLGRLGTFETQILQRAPLRS. Residues 68 to 100 form a disordered region; it reads DGISKDGSGDGNKKSASEGSSKKSGSGNSGKGG. Positions 69-83 are enriched in basic and acidic residues; that stretch reads GISKDGSGDGNKKSA. Positions 84 to 93 are enriched in low complexity; that stretch reads SEGSSKKSGS. The ClpX-type ZB domain maps to 93–146; it reads SGNSGKGGNQLRCPKCGDLCTHVETFVSSTRFVKCEKCHHFFVVLSEADSKKSI. Positions 105, 108, 127, and 130 each coordinate Zn(2+). Position 294–301 (294–301) interacts with ATP; sequence PTGSGKTL. Lysine 437 carries the N6-acetyllysine modification. The segment covering 598–610 has biased composition (basic and acidic residues); it reads KEPGYIRAPTKES. Residues 598 to 633 are disordered; it reads KEPGYIRAPTKESSEEEYDSGVEEEGWPRQADAANS. Over residues 611-622 the composition is skewed to acidic residues; that stretch reads SEEEYDSGVEEE. The residue at position 617 (serine 617) is a Phosphoserine.

It belongs to the ClpX chaperone family. Homohexamer that forms a ring structure; this hexamerization requires ATP binding. Component of the ClpXP complex formed by the assembly of two CLPP heptameric rings with two CLPX hexameric rings, giving rise to a symmetrical structure with two central CLPP rings flanked by a CLPX ring at either end of the complex. Interacts with TFAM. As to expression, higher expression in skeletal muscle and heart and to a lesser extent in liver, brain, placenta, lung, kidney and pancreas.

It is found in the mitochondrion. Its subcellular location is the mitochondrion matrix. The protein resides in the mitochondrion nucleoid. The catalysed reaction is ATP + H2O = ADP + phosphate + H(+). Its function is as follows. ATP-dependent chaperone that functions as an unfoldase. As part of the ClpXP protease complex, it recognizes specific protein substrates, unfolds them using energy derived from ATP hydrolysis, and then translocates them to the proteolytic subunit (CLPP) of the ClpXP complex for degradation. Thanks to its chaperone activity, it also functions in the incorporation of the pyridoxal phosphate cofactor into 5-aminolevulinate synthase, thereby activating 5-aminolevulinate (ALA) synthesis, the first step in heme biosynthesis. This chaperone is also involved in the control of mtDNA nucleoid distribution, by regulating mitochondrial transcription factor A (TFAM) activity. This is ATP-dependent clpX-like chaperone, mitochondrial from Homo sapiens (Human).